Here is a 187-residue protein sequence, read N- to C-terminus: uncharacterized protein (187 aa).

A signal peptide spans 1–28; sequence MRLHRTNNSRRCTILLILALKIFDFVDT. Residues Asn58, Asn70, Asn156, and Asn168 are each glycosylated (N-linked (GlcNAc...) asparagine).

The protein localises to the secreted. This is an uncharacterized protein from Caenorhabditis elegans.